The following is a 92-amino-acid chain: UPF0125 protein NMA1005 (92 aa).

This sequence belongs to the UPF0125 (RnfH) family.

The sequence is that of UPF0125 protein NMA1005 from Neisseria meningitidis serogroup A / serotype 4A (strain DSM 15465 / Z2491).